Consider the following 766-residue polypeptide: Tetratricopeptide repeat protein 14 (766 aa).

A disordered region spans residues 35 to 55 (LGTAAEPARGAAPPPGAGRKE). Residues 125–207 (GDIVIGRISS…YHEKLAVSLY (83 aa)) form the S1 motif domain. TPR repeat units follow at residues 209–242 (SSLP…NSNS), 306–339 (ALKC…DKQN), 341–373 (EALV…CPTH), and 381–414 (CQTL…DETF). Positions 463 to 743 (EEKRLKKKRR…PDSRVKKNLP (281 aa)) are disordered. A compositionally biased stretch (low complexity) spans 475–496 (SSSSSVSSADESVSSSSSSSSS). The segment covering 497–506 (SHKRHKKSKR) has biased composition (basic residues). The segment covering 539–550 (PTNTSASFLNQK) has biased composition (polar residues). The segment covering 551 to 562 (QEVEKLLEKQDR) has biased composition (basic and acidic residues). Residues 594–605 (FYNSYKTQAGSS) show a composition bias toward polar residues. Composition is skewed to basic and acidic residues over residues 606–616 (KTEKPYKSERH) and 629–657 (NSED…RRWE). Polar residues predominate over residues 661 to 673 (VKYSTSPASSDYS). S666 is subject to Phosphoserine. Over residues 707–738 (RVYEKEDSCGEGNRNEAPEEMLNSKEQPDSRV) the composition is skewed to basic and acidic residues.

It belongs to the TTC14 family.

The chain is Tetratricopeptide repeat protein 14 from Mus musculus (Mouse).